A 515-amino-acid polypeptide reads, in one-letter code: 1-pyrroline-5-carboxylate dehydrogenase (515 aa).

Catalysis depends on residues Glu-286 and Cys-320.

It belongs to the aldehyde dehydrogenase family. RocA subfamily.

The enzyme catalyses L-glutamate 5-semialdehyde + NAD(+) + H2O = L-glutamate + NADH + 2 H(+). It participates in amino-acid degradation; L-proline degradation into L-glutamate; L-glutamate from L-proline: step 2/2. The polypeptide is 1-pyrroline-5-carboxylate dehydrogenase (rocA) (Bacillus subtilis (strain 168)).